We begin with the raw amino-acid sequence, 258 residues long: Putative cysteine-rich repeat secretory protein 61 (258 aa).

Residues 1 to 31 form the signal peptide; the sequence is MSSSFIPKRIALVLNLAMVAIQVFFIRSVSS. Gnk2-homologous domains are found at residues 38 to 140 and 146 to 253; these read YLYH…PTAF and DKNK…IYPF.

The protein belongs to the cysteine-rich repeat secretory protein family.

The protein resides in the secreted. The chain is Putative cysteine-rich repeat secretory protein 61 (CRRSP61) from Arabidopsis thaliana (Mouse-ear cress).